Reading from the N-terminus, the 547-residue chain is Glucose-6-phosphate isomerase (547 aa).

E351 acts as the Proton donor in catalysis. Residues H382 and K509 contribute to the active site.

The protein belongs to the GPI family.

It is found in the cytoplasm. It catalyses the reaction alpha-D-glucose 6-phosphate = beta-D-fructose 6-phosphate. It participates in carbohydrate biosynthesis; gluconeogenesis. Its pathway is carbohydrate degradation; glycolysis; D-glyceraldehyde 3-phosphate and glycerone phosphate from D-glucose: step 2/4. In terms of biological role, catalyzes the reversible isomerization of glucose-6-phosphate to fructose-6-phosphate. The polypeptide is Glucose-6-phosphate isomerase (Coxiella burnetii (strain RSA 493 / Nine Mile phase I)).